Consider the following 493-residue polypeptide: MTELNKLTVADSIKGLKNKDFTSTELIGAHIKQIEKHRNLNAYVTDTFDLALKQAEAADQKYAQNNARTLEGIPFAAKDLFCTKGIRTTACSNILKNFIPNYESSVTQNIFDKGGVMLGKTNMDEFAMGSANITSCFGNVISPWKANDDNADLVPGGSSGGSAAAVSGFMASAALGSDTGGSVRQPASFTGLVGFKPTYGRCSRYGMISFASSLDQAGIFTRSVLDSSIMLEAMMGFDEKDSTSIKAEVPELQSAIGSSMKNMKIGVPLSLGEGSIIEPDIMKMWQDTIELLKNAGAEIVDITLPHAKYGVAVYYVIAPAEASSNLSRYDGVRYGLRVERENMTLDEMYEMTRSTGFGEEVKRRIMIGTYVLSSSGMDAYYLKAQKVRRLVANDFNNAFAKVDAILLPAAPTAAFKIGEKQNDPTIMYLNDLFTIPASLAGLPCASVPAGLSARGLPLGIQIIGKQLDEYNVLKVASTIESGVKHIKFEPKGF.

Active-site charge relay system residues include Lys78 and Ser158. Ser182 serves as the catalytic Acyl-ester intermediate.

This sequence belongs to the amidase family. GatA subfamily. Heterotrimer of A, B and C subunits.

It carries out the reaction L-glutamyl-tRNA(Gln) + L-glutamine + ATP + H2O = L-glutaminyl-tRNA(Gln) + L-glutamate + ADP + phosphate + H(+). In terms of biological role, allows the formation of correctly charged Gln-tRNA(Gln) through the transamidation of misacylated Glu-tRNA(Gln) in organisms which lack glutaminyl-tRNA synthetase. The reaction takes place in the presence of glutamine and ATP through an activated gamma-phospho-Glu-tRNA(Gln). The polypeptide is Glutamyl-tRNA(Gln) amidotransferase subunit A (Rickettsia conorii (strain ATCC VR-613 / Malish 7)).